The primary structure comprises 160 residues: Cytochrome b6-f complex subunit 4 (160 aa).

A run of 3 helical transmembrane segments spans residues 36-56, 95-115, and 131-151; these read LLYV…ALAV, LLGV…PFIE, and TVFL…ALPL.

The protein belongs to the cytochrome b family. PetD subfamily. The 4 large subunits of the cytochrome b6-f complex are cytochrome b6, subunit IV (17 kDa polypeptide, PetD), cytochrome f and the Rieske protein, while the 4 small subunits are PetG, PetL, PetM and PetN. The complex functions as a dimer.

Its subcellular location is the cellular thylakoid membrane. Component of the cytochrome b6-f complex, which mediates electron transfer between photosystem II (PSII) and photosystem I (PSI), cyclic electron flow around PSI, and state transitions. This is Cytochrome b6-f complex subunit 4 from Trichormus variabilis (strain ATCC 29413 / PCC 7937) (Anabaena variabilis).